We begin with the raw amino-acid sequence, 138 residues long: Small ribosomal subunit protein uS9 (138 aa).

The disordered stretch occupies residues 99-138 (DPDNRPPLKTEGYLTRDPRAKERKKYGLHKARKAPQYSKR). The segment covering 100–118 (PDNRPPLKTEGYLTRDPRA) has biased composition (basic and acidic residues). Residues 119–138 (KERKKYGLHKARKAPQYSKR) are compositionally biased toward basic residues.

This sequence belongs to the universal ribosomal protein uS9 family.

The protein is Small ribosomal subunit protein uS9 of Nostoc punctiforme (strain ATCC 29133 / PCC 73102).